Consider the following 73-residue polypeptide: MLAAAKYIGSGVAALGLIGAGIGVGIVFAALIQGVSRNPSLRGQLFTYAILGFALSEATGLFALMVSFLLLYS.

2 consecutive transmembrane segments (helical) span residues 12 to 32 and 50 to 70; these read VAAL…AALI and ILGF…SFLL.

It belongs to the ATPase C chain family. In terms of assembly, F-type ATPases have 2 components, CF(1) - the catalytic core - and CF(0) - the membrane proton channel. CF(1) has five subunits: alpha(3), beta(3), gamma(1), delta(1), epsilon(1). CF(0) has three main subunits: a, b and c.

It is found in the mitochondrion inner membrane. In terms of biological role, mitochondrial membrane ATP synthase (F(1)F(0) ATP synthase or Complex V) produces ATP from ADP in the presence of a proton gradient across the membrane which is generated by electron transport complexes of the respiratory chain. F-type ATPases consist of two structural domains, F(1) - containing the extramembraneous catalytic core and F(0) - containing the membrane proton channel, linked together by a central stalk and a peripheral stalk. During catalysis, ATP synthesis in the catalytic domain of F(1) is coupled via a rotary mechanism of the central stalk subunits to proton translocation. Part of the complex F(0) domain. A homomeric c-ring of probably 10 subunits is part of the complex rotary element. This Mycosarcoma maydis (Corn smut fungus) protein is ATP synthase subunit 9, mitochondrial (ATP9).